Consider the following 199-residue polypeptide: dITP/XTP pyrophosphatase (199 aa).

7-12 (TSNRGK) contacts substrate. Residue Asp-74 is the Proton acceptor of the active site. A Mg(2+)-binding site is contributed by Asp-74. Substrate is bound by residues Ser-75, 156–159 (FGYD), Lys-179, and 184–185 (HR).

This sequence belongs to the HAM1 NTPase family. In terms of assembly, homodimer. It depends on Mg(2+) as a cofactor.

The enzyme catalyses XTP + H2O = XMP + diphosphate + H(+). It carries out the reaction dITP + H2O = dIMP + diphosphate + H(+). The catalysed reaction is ITP + H2O = IMP + diphosphate + H(+). Functionally, pyrophosphatase that catalyzes the hydrolysis of nucleoside triphosphates to their monophosphate derivatives, with a high preference for the non-canonical purine nucleotides XTP (xanthosine triphosphate), dITP (deoxyinosine triphosphate) and ITP. Seems to function as a house-cleaning enzyme that removes non-canonical purine nucleotides from the nucleotide pool, thus preventing their incorporation into DNA/RNA and avoiding chromosomal lesions. The polypeptide is dITP/XTP pyrophosphatase (Sulfurimonas denitrificans (strain ATCC 33889 / DSM 1251) (Thiomicrospira denitrificans (strain ATCC 33889 / DSM 1251))).